The sequence spans 341 residues: Hydrogenase expression/formation protein HupE (341 aa).

The protein belongs to the HypE family.

Functionally, may be involved in the maturation of the NifE hydrogenase. In Azotobacter chroococcum mcd 1, this protein is Hydrogenase expression/formation protein HupE (hupE).